The primary structure comprises 348 residues: Isopentenyl-diphosphate delta-isomerase (348 aa).

Substrate is bound at residue 9–10 (RK). FMN-binding positions include 68 to 70 (AMT), Ser98, and Asn127. Substrate is bound at residue Gln157. A Mg(2+)-binding site is contributed by Glu158. Residues Lys188, Ser213, Thr218, and 286–287 (AG) contribute to the FMN site.

Belongs to the IPP isomerase type 2 family. As to quaternary structure, homooctamer. Dimer of tetramers. Requires FMN as cofactor. NADPH serves as cofactor. The cofactor is Mg(2+).

The protein resides in the cytoplasm. The enzyme catalyses isopentenyl diphosphate = dimethylallyl diphosphate. In terms of biological role, involved in the biosynthesis of isoprenoids. Catalyzes the 1,3-allylic rearrangement of the homoallylic substrate isopentenyl (IPP) to its allylic isomer, dimethylallyl diphosphate (DMAPP). The protein is Isopentenyl-diphosphate delta-isomerase of Limosilactobacillus reuteri subsp. reuteri (strain JCM 1112) (Lactobacillus reuteri).